The primary structure comprises 416 residues: Exodeoxyribonuclease 7 large subunit (416 aa).

The protein belongs to the XseA family. Heterooligomer composed of large and small subunits.

Its subcellular location is the cytoplasm. It carries out the reaction Exonucleolytic cleavage in either 5'- to 3'- or 3'- to 5'-direction to yield nucleoside 5'-phosphates.. Bidirectionally degrades single-stranded DNA into large acid-insoluble oligonucleotides, which are then degraded further into small acid-soluble oligonucleotides. The sequence is that of Exodeoxyribonuclease 7 large subunit from Acidothermus cellulolyticus (strain ATCC 43068 / DSM 8971 / 11B).